A 392-amino-acid polypeptide reads, in one-letter code: S-adenosylmethionine synthase (392 aa).

Residue His15 participates in ATP binding. Position 17 (Asp17) interacts with Mg(2+). Glu43 contacts K(+). Glu56 and Gln99 together coordinate L-methionine. The flexible loop stretch occupies residues 99–109 (QSKDIAQGVDE). Residues 173–175 (DGK), 239–240 (KF), Asp248, 254–255 (RK), Ala271, and Lys275 each bind ATP. Residue Asp248 coordinates L-methionine. Lys279 contributes to the L-methionine binding site.

It belongs to the AdoMet synthase family. Homotetramer; dimer of dimers. Mg(2+) is required as a cofactor. Requires K(+) as cofactor.

It is found in the cytoplasm. The catalysed reaction is L-methionine + ATP + H2O = S-adenosyl-L-methionine + phosphate + diphosphate. It functions in the pathway amino-acid biosynthesis; S-adenosyl-L-methionine biosynthesis; S-adenosyl-L-methionine from L-methionine: step 1/1. Functionally, catalyzes the formation of S-adenosylmethionine (AdoMet) from methionine and ATP. The overall synthetic reaction is composed of two sequential steps, AdoMet formation and the subsequent tripolyphosphate hydrolysis which occurs prior to release of AdoMet from the enzyme. The sequence is that of S-adenosylmethionine synthase from Finegoldia magna (strain ATCC 29328 / DSM 20472 / WAL 2508) (Peptostreptococcus magnus).